Reading from the N-terminus, the 250-residue chain is 5'-nucleotidase SurE (250 aa).

A divalent metal cation is bound by residues Asp8, Asp9, Ser39, and Asn91.

Belongs to the SurE nucleotidase family. A divalent metal cation serves as cofactor.

The protein localises to the cytoplasm. The enzyme catalyses a ribonucleoside 5'-phosphate + H2O = a ribonucleoside + phosphate. Functionally, nucleotidase that shows phosphatase activity on nucleoside 5'-monophosphates. This is 5'-nucleotidase SurE from Leptospira interrogans serogroup Icterohaemorrhagiae serovar copenhageni (strain Fiocruz L1-130).